The following is a 736-amino-acid chain: Cytosolic neutral trehalase (736 aa).

The interval 1 to 47 is disordered; the sequence is MSEAPQARRVGSVDDHSVYDDAKTYYTSEERHNNSRSGPRQRTYSQN. The span at 11–33 shows a compositional bias: basic and acidic residues; that stretch reads GSVDDHSVYDDAKTYYTSEERHN. Polar residues predominate over residues 35-47; that stretch reads SRSGPRQRTYSQN. Ca(2+) is bound by residues D92, D94, N96, Q98, and D103. Substrate-binding positions include R279, 286 to 287, N323, 332 to 334, E399, R448, and G451; these read WD and RSQ. Catalysis depends on proton donor/acceptor residues D453 and E657.

It belongs to the glycosyl hydrolase 37 family. The cofactor is Ca(2+).

The protein resides in the cytoplasm. The enzyme catalyses alpha,alpha-trehalose + H2O = alpha-D-glucose + beta-D-glucose. The protein operates within carbohydrate degradation. Hydrolyzes intracellular trehalose to glucose. Plays a role in pathogenicity, specifically in proliferation of invasive hyphae in rice blast disease. The sequence is that of Cytosolic neutral trehalase (NTH1) from Pyricularia oryzae (strain 70-15 / ATCC MYA-4617 / FGSC 8958) (Rice blast fungus).